The following is a 638-amino-acid chain: Chaperone protein HtpG (638 aa).

The interval 1 to 344 (MQKKETLEFQ…SNDLPLNVSR (344 aa)) is a; substrate-binding. A b region spans residues 345 to 560 (EILQNNENIY…ENDITTQMSK (216 aa)). The c stretch occupies residues 561 to 638 (LLISTGQESP…LLLSNIIRLN (78 aa)).

Belongs to the heat shock protein 90 family. As to quaternary structure, homodimer.

It is found in the cytoplasm. In terms of biological role, molecular chaperone. Has ATPase activity. This chain is Chaperone protein HtpG, found in Wigglesworthia glossinidia brevipalpis.